Here is a 362-residue protein sequence, read N- to C-terminus: METTVRKQKKNLETKKPSIYSLQLHEMQDWLKEQGEPKFRAGQIFDWLYKKRVKNYEDMSNLSKGLREKLSNSFDITTLNTLVKQTSSDGTIKFLFQLYDGYSIETVLMRHEYGNSICVTTQVGCRIGCTFCASTLGGLKRNLEAGEIVAQVVEVQRALDESEERVSSLVVMGIGEPFDNYDNLMGFLRIINHEKGLHIGARHMTVSTSGIIPKIYKFAEEDLQINFAISLHAPNSELRSKLMPINRAYKLPDLMEAIKYYVNRTGRRITFEYGLFGGENDQVEHAEELAALLKGVKCHVNLIPVNYVPERDYVRTPREQIFLFEKTLKDRGVNVTIRREQGHDIDAACGQLRAKERKEETR.

Glutamate 105 functions as the Proton acceptor in the catalytic mechanism. Residues 111 to 344 form the Radical SAM core domain; sequence HEYGNSICVT…VTIRREQGHD (234 aa). Cysteine 118 and cysteine 349 form a disulfide bridge. [4Fe-4S] cluster is bound by residues cysteine 125, cysteine 129, and cysteine 132. Residues 175 to 176, serine 207, 230 to 232, and asparagine 306 contribute to the S-adenosyl-L-methionine site; these read GE and SLH. The active-site S-methylcysteine intermediate is cysteine 349.

The protein belongs to the radical SAM superfamily. RlmN family. It depends on [4Fe-4S] cluster as a cofactor.

It is found in the cytoplasm. The enzyme catalyses adenosine(2503) in 23S rRNA + 2 reduced [2Fe-2S]-[ferredoxin] + 2 S-adenosyl-L-methionine = 2-methyladenosine(2503) in 23S rRNA + 5'-deoxyadenosine + L-methionine + 2 oxidized [2Fe-2S]-[ferredoxin] + S-adenosyl-L-homocysteine. The catalysed reaction is adenosine(37) in tRNA + 2 reduced [2Fe-2S]-[ferredoxin] + 2 S-adenosyl-L-methionine = 2-methyladenosine(37) in tRNA + 5'-deoxyadenosine + L-methionine + 2 oxidized [2Fe-2S]-[ferredoxin] + S-adenosyl-L-homocysteine. Its function is as follows. Specifically methylates position 2 of adenine 2503 in 23S rRNA and position 2 of adenine 37 in tRNAs. This is Probable dual-specificity RNA methyltransferase RlmN from Bacillus anthracis (strain A0248).